Here is a 245-residue protein sequence, read N- to C-terminus: Protein canopy homolog 4 (245 aa).

Positions 1–27 (MCGLRFIMGPVRLEILLFILAAYGAWA) are cleaved as a signal peptide. 3 disulfides stabilise this stretch: Cys-44/Cys-202, Cys-47/Cys-190, and Cys-100/Cys-162. The segment at 207-245 (WTGKEKISDGQEEADDEEEEEEEEITKTSGNPKHDPEDL) is disordered. The stretch at 209–237 (GKEKISDGQEEADDEEEEEEEEITKTSGN) forms a coiled coil. Over residues 216–230 (GQEEADDEEEEEEEE) the composition is skewed to acidic residues.

This sequence belongs to the canopy family. As to quaternary structure, interacts with TLR4. In terms of tissue distribution, highly expressed in lung, spleen, thymus, and uterus. Moderately expressed in kidney, stomach and placenta. Weakly expressed in brain, heart, liver, small intestine, skeletal muscle and testis.

The protein localises to the secreted. Plays a role in the regulation of the cell surface expression of TLR4. This Mus musculus (Mouse) protein is Protein canopy homolog 4 (Cnpy4).